A 308-amino-acid polypeptide reads, in one-letter code: Pantothenate kinase (308 aa).

93 to 100 (GSVAVGKS) is an ATP binding site.

This sequence belongs to the prokaryotic pantothenate kinase family.

The protein resides in the cytoplasm. It carries out the reaction (R)-pantothenate + ATP = (R)-4'-phosphopantothenate + ADP + H(+). Its pathway is cofactor biosynthesis; coenzyme A biosynthesis; CoA from (R)-pantothenate: step 1/5. The polypeptide is Pantothenate kinase (Corynebacterium aurimucosum (strain ATCC 700975 / DSM 44827 / CIP 107346 / CN-1) (Corynebacterium nigricans)).